The following is a 324-amino-acid chain: MKLQQLRYIVEVVNHNLNVSSTAEGLYTSQPGISKQVRMLEDELGIQIFARSGKHLTQVTPAGQEIIRIAREVLSKVDAIKSVAGEHTWPDKGSLYVATTHTQARYALPGVIKGFIERYPRVSLHMHQGSPTQIAEAVSKGNADFAIATEALHLYDDLVMLPCYHWNRSIVVTPEHPLATKGSVSIEELAQYPLVTYTFGFTGRSELDTAFNRAGLTPRIVFTATDADVIKTYVRLGLGVGVIASMAVDPVSDPDLVKLDANGIFSHSTTKIGFRRSTFLRSYMYDFIQRFAPHLTRDVVDTAVALRSNEDIEAMFKDIKLPEK.

An HTH lysR-type domain is found at 1–59 (MKLQQLRYIVEVVNHNLNVSSTAEGLYTSQPGISKQVRMLEDELGIQIFARSGKHLTQV). Residues 19–38 (VSSTAEGLYTSQPGISKQVR) constitute a DNA-binding region (H-T-H motif).

The protein belongs to the LysR transcriptional regulatory family. Homotetramer.

The protein localises to the cytoplasm. In terms of biological role, this protein is a positive regulator of gene expression for the cysteine regulon. The inducer for CysB is N-acetylserine. Thiosulfate and sulfide act as anti-inducers. The polypeptide is HTH-type transcriptional regulator CysB (cysB) (Klebsiella pneumoniae).